The chain runs to 607 residues: Condensin-2 complex subunit H2 (607 aa).

T19 carries the post-translational modification Phosphothreonine. Phosphoserine is present on residues S95, S231, S235, and S252. 2 disordered regions span residues 211–312 (YPMS…WQSL) and 325–347 (KGKPYSVPPGVEEAPGQKRKRKG). Acidic residues predominate over residues 254–263 (GEEDAEDGAE). Residue S494 is modified to Phosphoserine.

Belongs to the CND2 H2 (condensin-2 subunit 2) family. In terms of assembly, component of the condensin-2 complex, which contains the SMC2 and SMC4 heterodimer, and three non SMC subunits, NCAPG2, NCAPH2 and NCAPD3 that probably regulate the complex.

It localises to the nucleus. In terms of biological role, regulatory subunit of the condensin-2 complex, a complex that seems to provide chromosomes with an additional level of organization and rigidity and in establishing mitotic chromosome architecture. May promote the resolution of double-strand DNA catenanes (intertwines) between sister chromatids. Condensin-mediated compaction likely increases tension in catenated sister chromatids, providing directionality for type II topoisomerase-mediated strand exchanges toward chromatid decatenation. Required for decatenation of chromatin bridges at anaphase. Early in neurogenesis, may play an essential role to ensure accurate mitotic chromosome condensation in neuron stem cells, ultimately affecting neuron pool and cortex size. Seems to have lineage-specific role in T-cell development. This chain is Condensin-2 complex subunit H2, found in Mus musculus (Mouse).